The primary structure comprises 207 residues: Casparian strip membrane protein 1 (207 aa).

At Ala-2 the chain carries N-acetylalanine. Over 2-44 the chain is Cytoplasmic; sequence AKESTTIDVGEPNTMTKSTSHVVVDEKKKKGFVAAAAGGGYKR. The helical transmembrane segment at 45 to 65 threads the bilayer; sequence GLAVFDFLLRLAAIGITIGAS. Over 66 to 95 the chain is Extracellular; it reads SVMFTAEETLPFFTQFLQFQAGYDDFPTFQ. Residues 96 to 116 form a helical membrane-spanning segment; that stretch reads FFVIAIAIVASYLVLSLPFSI. The Cytoplasmic segment spans residues 117–128; the sequence is VTIVRPLAVAPR. Residues 129-149 traverse the membrane as a helical segment; the sequence is LILLISDTVVLTLTTAAAAAA. At 150–181 the chain is on the extracellular side; it reads ASIVYLAHNGNTNTNWLPICQQFGDFCQTAST. Residues 182-202 form a helical membrane-spanning segment; sequence AVVAASISVAFFVLLIVISAI. Over 203 to 207 the chain is Cytoplasmic; the sequence is ALKRH.

Belongs to the Casparian strip membrane proteins (CASP) family. As to quaternary structure, homodimer and heterodimers.

It is found in the cell membrane. Functionally, regulates membrane-cell wall junctions and localized cell wall deposition. Required for establishment of the Casparian strip membrane domain (CSD) and the subsequent formation of Casparian strips, a cell wall modification of the root endodermis that determines an apoplastic barrier between the intraorganismal apoplasm and the extraorganismal apoplasm and prevents lateral diffusion. The sequence is that of Casparian strip membrane protein 1 from Raphanus raphanistrum (Wild radish).